A 130-amino-acid chain; its full sequence is Small ribosomal subunit protein uS9 (130 aa).

This sequence belongs to the universal ribosomal protein uS9 family.

In Pseudomonas fluorescens (strain SBW25), this protein is Small ribosomal subunit protein uS9.